Consider the following 298-residue polypeptide: ATP synthase F(1) complex subunit gamma, mitochondrial (298 aa).

The N-terminal 25 residues, Met1–Met25, are a transit peptide targeting the mitochondrion. Lys39 is subject to N6-acetyllysine. Lys49 is modified (N6-succinyllysine). At Lys55 the chain carries N6-acetyllysine. N6-acetyllysine; alternate is present on Lys115. The residue at position 115 (Lys115) is an N6-succinyllysine; alternate. Phosphoserine is present on Ser146. N6-acetyllysine; alternate is present on Lys154. Lys154 carries the post-translational modification N6-succinyllysine; alternate. N6-acetyllysine is present on Lys197. Residue Lys270 is modified to N6-succinyllysine.

This sequence belongs to the ATPase gamma chain family. In terms of assembly, component of the ATP synthase complex composed at least of ATP5F1A/subunit alpha, ATP5F1B/subunit beta, ATP5MC1/subunit c (homooctomer), MT-ATP6/subunit a, MT-ATP8/subunit 8, ATP5ME/subunit e, ATP5MF/subunit f, ATP5MG/subunit g, ATP5MK/subunit k, ATP5MJ/subunit j, ATP5F1C/subunit gamma, ATP5F1D/subunit delta, ATP5F1E/subunit epsilon, ATP5PF/subunit F6, ATP5PB/subunit b, ATP5PD/subunit d, ATP5PO/subunit OSCP. ATP synthase complex consists of a soluble F(1) head domain (subunits alpha(3) and beta(3)) - the catalytic core - and a membrane F(0) domain - the membrane proton channel (subunits c, a, 8, e, f, g, k and j). These two domains are linked by a central stalk (subunits gamma, delta, and epsilon) rotating inside the F1 region and a stationary peripheral stalk (subunits F6, b, d, and OSCP). Interacts with FLVCR2; this interaction occurs in the absence of heme and is disrupted upon heme binding.

Its subcellular location is the mitochondrion inner membrane. Subunit gamma, of the mitochondrial membrane ATP synthase complex (F(1)F(0) ATP synthase or Complex V) that produces ATP from ADP in the presence of a proton gradient across the membrane which is generated by electron transport complexes of the respiratory chain. ATP synthase complex consist of a soluble F(1) head domain - the catalytic core - and a membrane F(1) domain - the membrane proton channel. These two domains are linked by a central stalk rotating inside the F(1) region and a stationary peripheral stalk. During catalysis, ATP synthesis in the catalytic domain of F(1) is coupled via a rotary mechanism of the central stalk subunits to proton translocation. In vivo, can only synthesize ATP although its ATP hydrolase activity can be activated artificially in vitro. With the central stalk subunit delta, is essential for the biogenesis of F(1) catalytic part of the ATP synthase complex namely in the formation of F1 assembly intermediate. This Macaca fascicularis (Crab-eating macaque) protein is ATP synthase F(1) complex subunit gamma, mitochondrial.